Reading from the N-terminus, the 287-residue chain is Large ribosomal subunit protein uL2 (287 aa).

The tract at residues 221 to 287 (RGSVMNPCDH…SKRSRGGRDS (67 aa)) is disordered. Positions 258-287 (KTRKKNKPSNKLVVRRRRRISKRSRGGRDS) are enriched in basic residues.

The protein belongs to the universal ribosomal protein uL2 family. Part of the 50S ribosomal subunit. Forms a bridge to the 30S subunit in the 70S ribosome.

In terms of biological role, one of the primary rRNA binding proteins. Required for association of the 30S and 50S subunits to form the 70S ribosome, for tRNA binding and peptide bond formation. It has been suggested to have peptidyltransferase activity; this is somewhat controversial. Makes several contacts with the 16S rRNA in the 70S ribosome. In Prochlorococcus marinus (strain MIT 9312), this protein is Large ribosomal subunit protein uL2.